The sequence spans 311 residues: Dihydroorotate dehydrogenase B (NAD(+)), catalytic subunit (311 aa).

FMN-binding positions include Ser24 and 48–49; that span reads KA. Residues Lys48 and 72-76 contribute to the substrate site; that span reads NAIGL. Residues Asn104 and Asn132 each coordinate FMN. Asn132 contributes to the substrate binding site. Cys135 (nucleophile) is an active-site residue. Residues Lys170 and Ile196 each coordinate FMN. 197 to 198 serves as a coordination point for substrate; it reads NT. Residues Gly222, 248 to 249, and 270 to 271 contribute to the FMN site; these read GG and GT.

This sequence belongs to the dihydroorotate dehydrogenase family. Type 1 subfamily. In terms of assembly, heterotetramer of 2 PyrK and 2 PyrD type B subunits. FMN serves as cofactor.

Its subcellular location is the cytoplasm. The catalysed reaction is (S)-dihydroorotate + NAD(+) = orotate + NADH + H(+). The protein operates within pyrimidine metabolism; UMP biosynthesis via de novo pathway; orotate from (S)-dihydroorotate (NAD(+) route): step 1/1. Catalyzes the conversion of dihydroorotate to orotate with NAD(+) as electron acceptor. Cannot use fumarate as an electron acceptor. The protein is Dihydroorotate dehydrogenase B (NAD(+)), catalytic subunit (pyrDB) of Lactococcus lactis subsp. cremoris (strain MG1363).